The following is a 257-amino-acid chain: MSDDSWSVAGHTFKSRLIVGTGKYKDYAQNAAAVKAAGAEIVTVAVRRVNLTDTSAPMLTDYIDPKEYCFLPNTAGCFNAEEAVRTLRLAREAGGWTLVKLEVLGEARTLYPDMVETLKATEILVKEGFQPMVYCSDDPIMAKRLEDAGAVAIMPLGAPIGSGLGLQNPVMLRLIVEAANVPVLVDAGVGTASDAAVALELGCDAVLMNTAIAEAKNPVLMAQAMKSAVEAGRMAYLAGRMGKRMYADPSSPLAGLI.

Lys-100 functions as the Schiff-base intermediate with DXP in the catalytic mechanism. Residues Gly-161, 187–188 (AG), and 209–210 (NT) contribute to the 1-deoxy-D-xylulose 5-phosphate site.

Belongs to the ThiG family. In terms of assembly, homotetramer. Forms heterodimers with either ThiH or ThiS.

Its subcellular location is the cytoplasm. The catalysed reaction is [ThiS sulfur-carrier protein]-C-terminal-Gly-aminoethanethioate + 2-iminoacetate + 1-deoxy-D-xylulose 5-phosphate = [ThiS sulfur-carrier protein]-C-terminal Gly-Gly + 2-[(2R,5Z)-2-carboxy-4-methylthiazol-5(2H)-ylidene]ethyl phosphate + 2 H2O + H(+). Its pathway is cofactor biosynthesis; thiamine diphosphate biosynthesis. Its function is as follows. Catalyzes the rearrangement of 1-deoxy-D-xylulose 5-phosphate (DXP) to produce the thiazole phosphate moiety of thiamine. Sulfur is provided by the thiocarboxylate moiety of the carrier protein ThiS. In vitro, sulfur can be provided by H(2)S. The sequence is that of Thiazole synthase from Zymomonas mobilis subsp. mobilis (strain ATCC 31821 / ZM4 / CP4).